Reading from the N-terminus, the 276-residue chain is Rhomboid protease GlpG (276 aa).

Transmembrane regions (helical) follow at residues 94–114 (AGPL…LMQI), 142–162 (ALLH…WYLG), 168–188 (VLGT…SGWA), 193–213 (SGTY…YVWL), 229–249 (LMAF…GMSI), and 250–270 (ANAA…WDTY). The active-site Nucleophile is S201. The active site involves H254.

Belongs to the peptidase S54 family.

It localises to the cell inner membrane. The catalysed reaction is Cleaves type-1 transmembrane domains using a catalytic dyad composed of serine and histidine that are contributed by different transmembrane domains.. In terms of biological role, rhomboid-type serine protease that catalyzes intramembrane proteolysis. This Pectobacterium atrosepticum (strain SCRI 1043 / ATCC BAA-672) (Erwinia carotovora subsp. atroseptica) protein is Rhomboid protease GlpG.